The chain runs to 608 residues: Microtubule-associated protein VP7 (608 aa).

It is found in the virion. The protein localises to the host cytoplasm. It localises to the host cytoskeleton. In terms of biological role, minor inner capsid component. Displays NTPase and RNA 5'-triphosphatase (RTPase) activities. May function as a cofactor of polymerase. Associates with microtubules and plays a role in the formation, structural organization and morphology of viral inclusions, where the assembly of cores and the replication of viral RNA occur. In Oryza latifolia (Indian wild rice), this protein is Microtubule-associated protein VP7.